The primary structure comprises 125 residues: Small ribosomal subunit protein uS13 (125 aa).

A disordered region spans residues 94-125 (SLPVRGQRTQTNARTRKGKRKTVAGKKKAVKK). The segment covering 107–125 (RTRKGKRKTVAGKKKAVKK) has biased composition (basic residues).

It belongs to the universal ribosomal protein uS13 family. As to quaternary structure, part of the 30S ribosomal subunit. Forms a loose heterodimer with protein S19. Forms two bridges to the 50S subunit in the 70S ribosome.

Its function is as follows. Located at the top of the head of the 30S subunit, it contacts several helices of the 16S rRNA. In the 70S ribosome it contacts the 23S rRNA (bridge B1a) and protein L5 of the 50S subunit (bridge B1b), connecting the 2 subunits; these bridges are implicated in subunit movement. Contacts the tRNAs in the A and P-sites. This chain is Small ribosomal subunit protein uS13, found in Prosthecochloris aestuarii (strain DSM 271 / SK 413).